The following is a 207-amino-acid chain: MSLLIEQARYHLSAHNARQLPDDGGYEVAFAGRSNAGKSSALNALTRQNSLARVSKTPGRTQQLVFFQIQPERYLVDLPGYGYAKVPQDLQAHWQAFIDRYFRTREALRGLVVVMDIRHPLKDYDLQMLGYAAERGLPAHGLLTKADKLGRGQQMQTLQKVKKEVSSRFGDSVTVQTYSGESRQGVDELRGIVGGWLGLDVEPPADA.

In terms of domain architecture, EngB-type G spans 24–199 (GGYEVAFAGR…RGIVGGWLGL (176 aa)). Residues 32–39 (GRSNAGKS), 59–63 (GRTQQ), 77–80 (DLPG), 144–147 (TKAD), and 178–180 (YSG) each bind GTP. Mg(2+) is bound by residues Ser-39 and Thr-61.

Belongs to the TRAFAC class TrmE-Era-EngA-EngB-Septin-like GTPase superfamily. EngB GTPase family. Mg(2+) serves as cofactor.

Its function is as follows. Necessary for normal cell division and for the maintenance of normal septation. In Xanthomonas campestris pv. campestris (strain 8004), this protein is Probable GTP-binding protein EngB.